The sequence spans 283 residues: Probable endonuclease 4 (283 aa).

Zn(2+) contacts are provided by His-69, His-109, Glu-144, Asp-178, His-181, His-215, Asp-228, His-230, and Glu-260.

The protein belongs to the AP endonuclease 2 family. Zn(2+) serves as cofactor.

It catalyses the reaction Endonucleolytic cleavage to 5'-phosphooligonucleotide end-products.. Endonuclease IV plays a role in DNA repair. It cleaves phosphodiester bonds at apurinic or apyrimidinic (AP) sites, generating a 3'-hydroxyl group and a 5'-terminal sugar phosphate. The protein is Probable endonuclease 4 of Thermosipho melanesiensis (strain DSM 12029 / CIP 104789 / BI429).